The following is an 86-amino-acid chain: Neurotoxin E1x (86 aa).

The signal sequence occupies residues 1 to 19 (MNSLLMITACLVVIGTVWA). One can recognise an LCN-type CS-alpha/beta domain in the interval 20–84 (KEGYLVDVKG…TWPLPNKTCG (65 aa)). Disulfide bonds link Cys30/Cys83, Cys34/Cys59, Cys43/Cys64, and Cys47/Cys66. Residue Cys83 is modified to Cysteine amide.

Belongs to the long (4 C-C) scorpion toxin superfamily. Sodium channel inhibitor family. Beta subfamily. As to expression, expressed by the venom gland.

It localises to the secreted. Functionally, binds to sodium channels (Nav) and inhibits the inactivation of the activated channels, thereby blocking neuronal transmission. The sequence is that of Neurotoxin E1x from Centruroides sculpturatus (Arizona bark scorpion).